Reading from the N-terminus, the 329-residue chain is Acetyl-coenzyme A carboxylase carboxyl transferase subunit alpha (329 aa).

Positions 40-294 (QLETLAARRR…KTSILRHLTE (255 aa)) constitute a CoA carboxyltransferase C-terminal domain.

Belongs to the AccA family. In terms of assembly, acetyl-CoA carboxylase is a heterohexamer composed of biotin carboxyl carrier protein (AccB), biotin carboxylase (AccC) and two subunits each of ACCase subunit alpha (AccA) and ACCase subunit beta (AccD).

It is found in the cytoplasm. The enzyme catalyses N(6)-carboxybiotinyl-L-lysyl-[protein] + acetyl-CoA = N(6)-biotinyl-L-lysyl-[protein] + malonyl-CoA. The protein operates within lipid metabolism; malonyl-CoA biosynthesis; malonyl-CoA from acetyl-CoA: step 1/1. In terms of biological role, component of the acetyl coenzyme A carboxylase (ACC) complex. First, biotin carboxylase catalyzes the carboxylation of biotin on its carrier protein (BCCP) and then the CO(2) group is transferred by the carboxyltransferase to acetyl-CoA to form malonyl-CoA. This is Acetyl-coenzyme A carboxylase carboxyl transferase subunit alpha from Prochlorococcus marinus (strain SARG / CCMP1375 / SS120).